A 178-amino-acid chain; its full sequence is Small ribosomal subunit protein uS5 (178 aa).

The S5 DRBM domain maps to phenylalanine 15 to valine 78.

This sequence belongs to the universal ribosomal protein uS5 family. In terms of assembly, part of the 30S ribosomal subunit. Contacts proteins S4 and S8.

With S4 and S12 plays an important role in translational accuracy. Its function is as follows. Located at the back of the 30S subunit body where it stabilizes the conformation of the head with respect to the body. In Thermotoga neapolitana (strain ATCC 49049 / DSM 4359 / NBRC 107923 / NS-E), this protein is Small ribosomal subunit protein uS5.